We begin with the raw amino-acid sequence, 315 residues long: DNA-directed RNA polymerase subunit alpha (315 aa).

Residues 1–228 (MAQFQIECVE…DLFNPLKDIS (228 aa)) form an alpha N-terminal domain (alpha-NTD) region. The alpha C-terminal domain (alpha-CTD) stretch occupies residues 243–315 (TAQIPIEELQ…LPQERSSKHN (73 aa)).

This sequence belongs to the RNA polymerase alpha chain family. Homodimer. In cyanobacteria the RNAP catalytic core is composed of 2 alpha, 1 beta, 1 beta', 1 gamma and 1 omega subunit. When a sigma factor is associated with the core the holoenzyme is formed, which can initiate transcription.

It catalyses the reaction RNA(n) + a ribonucleoside 5'-triphosphate = RNA(n+1) + diphosphate. Its function is as follows. DNA-dependent RNA polymerase catalyzes the transcription of DNA into RNA using the four ribonucleoside triphosphates as substrates. The polypeptide is DNA-directed RNA polymerase subunit alpha (Nostoc sp. (strain PCC 7120 / SAG 25.82 / UTEX 2576)).